We begin with the raw amino-acid sequence, 152 residues long: UPF0756 membrane protein PEPE_1090 (152 aa).

The next 4 membrane-spanning stretches (helical) occupy residues 4–24, 52–72, 85–105, and 115–135; these read WLFLIGIFIVALLGKNQSLII, WGVTIISITILVPIATGKIGF, WIAVACGILVSLLSYQGVGFL, and LVMGTIIGVVFMNGIAAGPII.

The protein belongs to the UPF0756 family.

Its subcellular location is the cell membrane. The protein is UPF0756 membrane protein PEPE_1090 of Pediococcus pentosaceus (strain ATCC 25745 / CCUG 21536 / LMG 10740 / 183-1w).